Here is a 226-residue protein sequence, read N- to C-terminus: Thiamine-phosphate synthase (226 aa).

4-amino-2-methyl-5-(diphosphooxymethyl)pyrimidine contacts are provided by residues glutamine 46–lysine 50 and asparagine 87. Residues aspartate 88 and aspartate 107 each coordinate Mg(2+). Serine 126 provides a ligand contact to 4-amino-2-methyl-5-(diphosphooxymethyl)pyrimidine. A 2-[(2R,5Z)-2-carboxy-4-methylthiazol-5(2H)-ylidene]ethyl phosphate-binding site is contributed by threonine 152–threonine 154. Lysine 155 contributes to the 4-amino-2-methyl-5-(diphosphooxymethyl)pyrimidine binding site. Glycine 183 contacts 2-[(2R,5Z)-2-carboxy-4-methylthiazol-5(2H)-ylidene]ethyl phosphate.

The protein belongs to the thiamine-phosphate synthase family. Mg(2+) is required as a cofactor.

The catalysed reaction is 2-[(2R,5Z)-2-carboxy-4-methylthiazol-5(2H)-ylidene]ethyl phosphate + 4-amino-2-methyl-5-(diphosphooxymethyl)pyrimidine + 2 H(+) = thiamine phosphate + CO2 + diphosphate. The enzyme catalyses 2-(2-carboxy-4-methylthiazol-5-yl)ethyl phosphate + 4-amino-2-methyl-5-(diphosphooxymethyl)pyrimidine + 2 H(+) = thiamine phosphate + CO2 + diphosphate. It catalyses the reaction 4-methyl-5-(2-phosphooxyethyl)-thiazole + 4-amino-2-methyl-5-(diphosphooxymethyl)pyrimidine + H(+) = thiamine phosphate + diphosphate. Its pathway is cofactor biosynthesis; thiamine diphosphate biosynthesis; thiamine phosphate from 4-amino-2-methyl-5-diphosphomethylpyrimidine and 4-methyl-5-(2-phosphoethyl)-thiazole: step 1/1. Its function is as follows. Condenses 4-methyl-5-(beta-hydroxyethyl)thiazole monophosphate (THZ-P) and 2-methyl-4-amino-5-hydroxymethyl pyrimidine pyrophosphate (HMP-PP) to form thiamine monophosphate (TMP). The polypeptide is Thiamine-phosphate synthase (Mycobacterium sp. (strain KMS)).